Reading from the N-terminus, the 1397-residue chain is Centlein (1397 aa).

Disordered regions lie at residues 1–43 and 56–76; these read MAAR…GLAG and LWRG…GAAV. Ala-2 carries the post-translational modification N-acetylalanine. A phosphoserine mark is found at Ser-5, Ser-9, and Ser-22. Coiled coils occupy residues 95–126 and 405–481; these read EEAK…KEFV and VVNL…KLMA. 2 disordered regions span residues 422-449 and 485-521; these read LKEK…SGKA and CDQD…SEEL. Over residues 485–503 the composition is skewed to basic and acidic residues; sequence CDQDFSEKGTEGKHKEPPV. Coiled-coil stretches lie at residues 674–778, 973–1114, and 1152–1299; these read KNEK…KALR, ISLR…MELL, and SESN…LKKM. A Phosphoserine modification is found at Ser-1219. A Phosphothreonine modification is found at Thr-1334.

Interacts with CEP250 and CEP68. Interacts with NEK2; the interaction leads to phosphorylation of CNTLN. In terms of processing, phosphorylated directly or indirectly by NEK2.

The protein localises to the cytoplasm. It is found in the cytoskeleton. It localises to the microtubule organizing center. The protein resides in the centrosome. Its subcellular location is the centriole. Functionally, required for centrosome cohesion and recruitment of CEP68 to centrosomes. This is Centlein from Mus musculus (Mouse).